Consider the following 834-residue polypeptide: MSASRSRNKQSKLCDDERLDISRDEFNRFQEAFGKEEFRKLFFDYVDEIQDPENRKIYESEITQLEKERGVEVRFIHPKPGFVIKTALDGELKCFINIASCEEIQRPKNEVATDPSSGSRGLSWSIPMAQTTSRDDFDAKNNHCKVFDVVFHPDALHLAMRNKQFRQCLIDTALDAIEREYKVSLDRANLKFPKLDYKGIPRPTVIRKMADNPTAEEQEPHPLAHMFPTKPPAPGKQEPRVLPMKTKPSPVPEFTVPRYTIKHSHDVDLSEYTDELDAKLHVTVPRSLVVEIELPLLRSTAECQLDVTSKSIYLFSERQGAKYRLKLDLPFIVDDKAGRARFDTDMRRLSITLPVVRKSIQEQAQMHETLRHFSREDSGVELHSNSESPVEEDPDGELSDSKADISETSSPSVAPANSPFLKSSVHYQLPSKFDCNVLDNVMAFVLHVPNVQPDSIEQLREQRSLHLKFATIGSGYYPTHYAFYVELSAEHEDSSIESAEAEAWDNNVVLKLCLNSQSETPASYLAGLDATELKEYPVHGQYHVKSKGKVNAKKDNAPLDVKFERNQEGHALKVTIRPGTKEEEEDKENQDQEPESDQQQQQQVQNKKPGKKQRKKNKKERSLSESACADMILQEPLAKTNELQPRATFKLPPQRKQRSYSECNDSTGRSHRGILKRFSRYGPRPSMSDSWSSIDDSSSYSCSVDASGTSLFSQSFGGIPEEDRSDAGLSESCKKTVRFNDHIMKQVFRLDSSILGQRKKNQKRRDLKLRAQQRRLSEGDSVDYEETRGSALKQEENPSRNCNDSGLDLTGAAGAHSNNNESDAKNTMMFEMDD.

Disordered regions lie at residues 214-239 (TAEEQEPHPLAHMFPTKPPAPGKQEP), 374-415 (SRED…SVAP), 547-669 (KGKV…STGR), and 759-834 (KKNQ…EMDD). The residue at position 378 (Ser-378) is a Phosphoserine. Over residues 389–398 (PVEEDPDGEL) the composition is skewed to acidic residues. Basic and acidic residues predominate over residues 552-571 (AKKDNAPLDVKFERNQEGHA). Positions 582-596 (EEEEDKENQDQEPES) are enriched in acidic residues. A compositionally biased stretch (low complexity) spans 597-607 (DQQQQQQVQNK). Composition is skewed to basic residues over residues 608 to 619 (KPGKKQRKKNKK) and 759 to 773 (KKNQKRRDLKLRAQQ). Phosphoserine is present on Ser-777. The segment covering 785 to 798 (EETRGSALKQEENP) has biased composition (basic and acidic residues).

The protein belongs to the PIH1 family. Kintoun subfamily. As to quaternary structure, interacts with Pp1alpha-96A, Pp1-87B, Pp1-13C and flw.

The protein localises to the cytoplasm. In terms of biological role, required for cytoplasmic pre-assembly of axonemal dyneins, thereby playing a central role in motility in cilia and flagella. Involved in pre-assembly of dynein arm complexes in the cytoplasm before intraflagellar transport loads them for the ciliary compartment. This is Protein kintoun from Drosophila melanogaster (Fruit fly).